The sequence spans 120 residues: ATP-dependent Clp protease adapter protein ClpS (120 aa).

Positions 9–32 (LTFNQDHPAEHEDDSSGIAVQESK) are disordered.

It belongs to the ClpS family. Binds to the N-terminal domain of the chaperone ClpA.

Its function is as follows. Involved in the modulation of the specificity of the ClpAP-mediated ATP-dependent protein degradation. The sequence is that of ATP-dependent Clp protease adapter protein ClpS from Ectopseudomonas mendocina (strain ymp) (Pseudomonas mendocina).